The chain runs to 267 residues: Putative ABC transporter permease protein MJ0413 (267 aa).

7 consecutive transmembrane segments (helical) span residues 18–38, 48–68, 78–98, 115–135, 136–156, 188–208, and 228–248; these read VLKI…AIYI, EAVI…GSLI, VISG…LMGY, PIPP…GEMS, MIFI…ISGV, PSIL…VVAA, and LSRM…GLVL. In terms of domain architecture, ABC transmembrane type-1 spans 71-252; the sequence is TIISIKRVIS…LIGLVLDRGL (182 aa).

This sequence belongs to the binding-protein-dependent transport system permease family. CysTW subfamily.

It localises to the cell membrane. Probably part of a binding-protein-dependent transport system. Probably responsible for the translocation of the substrate across the membrane. This is Putative ABC transporter permease protein MJ0413 from Methanocaldococcus jannaschii (strain ATCC 43067 / DSM 2661 / JAL-1 / JCM 10045 / NBRC 100440) (Methanococcus jannaschii).